A 162-amino-acid chain; its full sequence is MQFLTSLAAAASLVSLASARISGIALPQTVKAGDNINAIVVTEGYIQSVQDIAIAFGVAPAASAYPGTLSTLLGSFYLGPEQSNVQNNITEPITIPESLVPGEYVIAASLFSLYGASSSPTVSNYNVTVNVGNETSTTYVRSQFYVGNSNSTVCLGGYTRKI.

An N-terminal signal peptide occupies residues 1-19 (MQFLTSLAAAASLVSLASA). Asn88, Asn126, Asn133, and Asn150 each carry an N-linked (GlcNAc...) asparagine glycan. Residues 103–132 (EYVIAASLFSLYGASSSPTVSNYNVTVNVG) are BAK1/SERK3-binding.

Belongs to the NIS1 effector family. As to quaternary structure, interacts with the host pattern recognition receptor (PRR)-associated kinases BAK1/SERK3, BKK1/SERK4 and BIK1.

The protein localises to the secreted. Its subcellular location is the host cytoplasm. Functionally, secreted effector that induces necrotic lesions in Nicotiana benthamiana. Interacts with the host receptor-like kinases (RLKs) BAK1/SERK3 and BKK1/SERK4, inhibits their kinase activity and suppresses INF1-induced pathogen-associated molecular pattern (PAMP)-triggered immunity (PTI) in N.benthamiana. Also interacts with the host receptor-like cytoplasmic kinase (RLCK) BIK1 and inhibits its kinase activity, thereby inhibiting PAMP-induced ROS generation. In PTI, phosphorylation relaying by RLKs and RLCKs is critical for the initiation of downstream signaling. This is Necrosis-inducing secreted protein 1 from Colletotrichum orbiculare (strain 104-T / ATCC 96160 / CBS 514.97 / LARS 414 / MAFF 240422) (Cucumber anthracnose fungus).